A 515-amino-acid chain; its full sequence is Probable cytosol aminopeptidase (515 aa).

Mn(2+) is bound by residues Lys-274 and Asp-279. The active site involves Lys-286. The Mn(2+) site is built by Asp-297, Asp-356, and Glu-358. Arg-360 is a catalytic residue.

Belongs to the peptidase M17 family. Requires Mn(2+) as cofactor.

It localises to the cytoplasm. The enzyme catalyses Release of an N-terminal amino acid, Xaa-|-Yaa-, in which Xaa is preferably Leu, but may be other amino acids including Pro although not Arg or Lys, and Yaa may be Pro. Amino acid amides and methyl esters are also readily hydrolyzed, but rates on arylamides are exceedingly low.. It carries out the reaction Release of an N-terminal amino acid, preferentially leucine, but not glutamic or aspartic acids.. Its function is as follows. Presumably involved in the processing and regular turnover of intracellular proteins. Catalyzes the removal of unsubstituted N-terminal amino acids from various peptides. This chain is Probable cytosol aminopeptidase, found in Desulforapulum autotrophicum (strain ATCC 43914 / DSM 3382 / VKM B-1955 / HRM2) (Desulfobacterium autotrophicum).